Reading from the N-terminus, the 802-residue chain is Lon protease (802 aa).

The Lon N-terminal domain maps to 17–209; the sequence is LPILPLNNVV…QVLSFLERER (193 aa). Position 363–370 (363–370) interacts with ATP; that stretch reads GPPGVGKT. The Lon proteolytic domain occupies 599–780; sequence EDEVGVVTGL…DEVLPRVLHP (182 aa). Catalysis depends on residues S686 and K729.

It belongs to the peptidase S16 family. In terms of assembly, homohexamer. Organized in a ring with a central cavity.

It is found in the cytoplasm. It catalyses the reaction Hydrolysis of proteins in presence of ATP.. Its function is as follows. ATP-dependent serine protease that mediates the selective degradation of mutant and abnormal proteins as well as certain short-lived regulatory proteins. Required for cellular homeostasis and for survival from DNA damage and developmental changes induced by stress. Degrades polypeptides processively to yield small peptide fragments that are 5 to 10 amino acids long. Binds to DNA in a double-stranded, site-specific manner. The chain is Lon protease from Roseiflexus castenholzii (strain DSM 13941 / HLO8).